We begin with the raw amino-acid sequence, 440 residues long: Chromosomal replication initiator protein DnaA (440 aa).

The domain I, interacts with DnaA modulators stretch occupies residues 1 to 93 (MNVQLNEIWN…QTPVKPVAQE (93 aa)). Residues 94-101 (YTEDSNMS) are domain II. Residues 102 to 318 (FLNPKYTFDT…GALNRVIAYS (217 aa)) are domain III, AAA+ region. Residues Gly-146, Gly-148, Lys-149, and Thr-150 each coordinate ATP. A domain IV, binds dsDNA region spans residues 319-440 (TLTENIINVD…EEIKKNITGG (122 aa)).

This sequence belongs to the DnaA family. In terms of assembly, oligomerizes as a right-handed, spiral filament on DNA at oriC.

Its subcellular location is the cytoplasm. In terms of biological role, plays an essential role in the initiation and regulation of chromosomal replication. ATP-DnaA binds to the origin of replication (oriC) to initiate formation of the DNA replication initiation complex once per cell cycle. Binds the DnaA box (a 9 base pair repeat at the origin) and separates the double-stranded (ds)DNA. Forms a right-handed helical filament on oriC DNA; dsDNA binds to the exterior of the filament while single-stranded (ss)DNA is stabiized in the filament's interior. The ATP-DnaA-oriC complex binds and stabilizes one strand of the AT-rich DNA unwinding element (DUE), permitting loading of DNA polymerase. After initiation quickly degrades to an ADP-DnaA complex that is not apt for DNA replication. Binds acidic phospholipids. This Ruminiclostridium cellulolyticum (strain ATCC 35319 / DSM 5812 / JCM 6584 / H10) (Clostridium cellulolyticum) protein is Chromosomal replication initiator protein DnaA.